An 83-amino-acid polypeptide reads, in one-letter code: Large ribosomal subunit protein bL27 (83 aa).

This sequence belongs to the bacterial ribosomal protein bL27 family.

The chain is Large ribosomal subunit protein bL27 from Thermotoga neapolitana (strain ATCC 49049 / DSM 4359 / NBRC 107923 / NS-E).